The primary structure comprises 643 residues: Cytoplasmic dynein 1 intermediate chain 1 (643 aa).

Basic and acidic residues-rich tracts occupy residues 1 to 13 (MSDK…ELER) and 20 to 60 (QIRE…RETE). Disordered regions lie at residues 1–65 (MSDK…LLQS) and 96–123 (MSPS…RTLQ). At S2 the chain carries N-acetylserine. The interaction with DCTN1 stretch occupies residues 2–123 (SDKSDLKAEL…DLGPLTRTLQ (122 aa)). S50 and S100 each carry phosphoserine. A compositionally biased stretch (low complexity) spans 96 to 107 (MSPSSKSVSTPS). T105 bears the Phosphothreonine mark. 2 positions are modified to phosphoserine: S107 and S111. The interval 145–161 (KLGVSKVTQVDFLPREV) is interaction with DYNLT1. Residues 167-219 (ETQTPLATHQSEEDEEDEEMVEPKVGHDSELENQDKKQETKEAPPRELTEEEK) form a disordered region. Residue T174 is modified to Phosphothreonine. 2 positions are modified to phosphoserine: S177 and S195. Basic and acidic residues predominate over residues 187 to 219 (VEPKVGHDSELENQDKKQETKEAPPRELTEEEK). 7 WD repeats span residues 283–332 (SKHR…TTPE), 336–376 (HCQS…RTPV), 385–426 (AHTH…TPQE), 435–475 (SKPV…AGIG), 480–525 (GHQG…PLYS), 528–568 (DNAD…EVPT), and 574–613 (EGAY…VPHN). S633 carries the phosphoserine modification.

Belongs to the dynein intermediate chain family. In terms of assembly, homodimer. The cytoplasmic dynein 1 complex consists of two catalytic heavy chains (HCs) and a number of non-catalytic subunits presented by intermediate chains (ICs), light intermediate chains (LICs) and light chains (LCs); the composition seems to vary in respect to the IC, LIC and LC composition. The heavy chain homodimer serves as a scaffold for the probable homodimeric assembly of the respective non-catalytic subunits. The ICs and LICs bind directly to the HC dimer and the LCs assemble on the IC dimer. Isoform 1, isoform 2 and isoform 3 interact with DYNC1H1. Isoform 1, isoform 2 and isoform 3 interact with DYNLT3. Isoform 1, isoform 2 and isoform 3 interact with DYNLT1. Interacts with DCTN1. Interacts with MCRS1; the interaction is required for the proper distribution of centriolar satellites. High levels seen in the brain and testis, while a lower level expression is seen in the liver, spleen, kidney, lung, skeletal muscle and heart.

The protein localises to the cytoplasm. It localises to the chromosome. Its subcellular location is the centromere. The protein resides in the kinetochore. It is found in the cytoskeleton. The protein localises to the spindle pole. Its function is as follows. Acts as one of several non-catalytic accessory components of the cytoplasmic dynein 1 complex that are thought to be involved in linking dynein to cargos and to adapter proteins that regulate dynein function. Cytoplasmic dynein 1 acts as a motor for the intracellular retrograde motility of vesicles and organelles along microtubules. The intermediate chains mediate the binding of dynein to dynactin via its 150 kDa component (p150-glued) DCTN1. May play a role in mediating the interaction of cytoplasmic dynein with membranous organelles and kinetochores. This chain is Cytoplasmic dynein 1 intermediate chain 1 (Dync1i1), found in Rattus norvegicus (Rat).